A 510-amino-acid polypeptide reads, in one-letter code: Glycerol kinase (510 aa).

ADP is bound at residue Thr13. Positions 13 and 14 each coordinate ATP. Thr13 is a sn-glycerol 3-phosphate binding site. Position 17 (Arg17) interacts with ADP. Residues Arg83, Glu84, Tyr135, and Asp255 each contribute to the sn-glycerol 3-phosphate site. Positions 83, 84, 135, 255, and 256 each coordinate glycerol. Positions 277, 321, 421, and 425 each coordinate ADP. 3 residues coordinate ATP: Thr277, Gly321, and Gly421.

This sequence belongs to the FGGY kinase family.

It catalyses the reaction glycerol + ATP = sn-glycerol 3-phosphate + ADP + H(+). The protein operates within polyol metabolism; glycerol degradation via glycerol kinase pathway; sn-glycerol 3-phosphate from glycerol: step 1/1. Key enzyme in the regulation of glycerol uptake and metabolism. Catalyzes the phosphorylation of glycerol to yield sn-glycerol 3-phosphate. The chain is Glycerol kinase from Halobacterium salinarum (strain ATCC 29341 / DSM 671 / R1).